The chain runs to 566 residues: Urease subunit alpha (566 aa).

The 438-residue stretch at 129-566 (GGVDTHIHFI…LPLAQRYFLF (438 aa)) folds into the Urease domain. Ni(2+) is bound by residues histidine 134, histidine 136, and lysine 217. Lysine 217 is modified (N6-carboxylysine). Histidine 219 contacts substrate. Positions 246 and 272 each coordinate Ni(2+). Histidine 320 acts as the Proton donor in catalysis. Residue aspartate 360 participates in Ni(2+) binding.

It belongs to the metallo-dependent hydrolases superfamily. Urease alpha subunit family. Heterotrimer of UreA (gamma), UreB (beta) and UreC (alpha) subunits. Three heterotrimers associate to form the active enzyme. Ni cation is required as a cofactor. In terms of processing, carboxylation allows a single lysine to coordinate two nickel ions.

Its subcellular location is the cytoplasm. It catalyses the reaction urea + 2 H2O + H(+) = hydrogencarbonate + 2 NH4(+). It participates in nitrogen metabolism; urea degradation; CO(2) and NH(3) from urea (urease route): step 1/1. This chain is Urease subunit alpha, found in Janthinobacterium sp. (strain Marseille) (Minibacterium massiliensis).